Reading from the N-terminus, the 213-residue chain is Probable GTP-binding protein EngB (213 aa).

In terms of domain architecture, EngB-type G spans 30 to 204; sequence SVQSIAFMGR…REFILETLGI (175 aa). Residues 38-45, 65-69, 83-86, 150-153, and 183-185 each bind GTP; these read GRSNSGKS, GKTKL, DLPG, TKID, and ISA. Mg(2+)-binding residues include Ser-45 and Thr-67.

The protein belongs to the TRAFAC class TrmE-Era-EngA-EngB-Septin-like GTPase superfamily. EngB GTPase family. It depends on Mg(2+) as a cofactor.

Its function is as follows. Necessary for normal cell division and for the maintenance of normal septation. The polypeptide is Probable GTP-binding protein EngB (Leptospira biflexa serovar Patoc (strain Patoc 1 / Ames)).